The following is a 359-amino-acid chain: Protein disulfide-isomerase C17H9.14c (359 aa).

The N-terminal stretch at 1–19 (MRLPLLSFVIFALFALVFA) is a signal peptide. 2 consecutive Thioredoxin domains span residues 20 to 130 (SGVV…EKTG) and 134 to 250 (RKIV…KKSG). Catalysis depends on nucleophile residues Cys-51 and Cys-54. 2 disulfide bridges follow: Cys-51/Cys-54 and Cys-170/Cys-173.

It belongs to the protein disulfide isomerase family.

It carries out the reaction Catalyzes the rearrangement of -S-S- bonds in proteins.. Participates in the folding of proteins containing disulfide bonds, may be involved in glycosylation, prolyl hydroxylation and triglyceride transfer. The chain is Protein disulfide-isomerase C17H9.14c from Schizosaccharomyces pombe (strain 972 / ATCC 24843) (Fission yeast).